The primary structure comprises 439 residues: Divalent metal cation transporter MntH (439 aa).

The next 11 helical transmembrane spans lie at G32 to D52, G67 to L87, I121 to L141, M144 to E164, L173 to T193, A214 to H234, V261 to G281, A301 to I321, A350 to L370, V371 to F391, and F406 to I426.

The protein belongs to the NRAMP family.

Its subcellular location is the cell inner membrane. In terms of biological role, h(+)-stimulated, divalent metal cation uptake system. This chain is Divalent metal cation transporter MntH, found in Verminephrobacter eiseniae (strain EF01-2).